The sequence spans 102 residues: MIPGEVITPETDIELNVGRETLKVVVANLGDRPIQVGSHFHFYEANDALQFDREAVKGFRLNIAAGTAIRFEPGQSREVELVALAGKREVYGFAGRVMGKLD.

This sequence belongs to the urease beta subunit family. In terms of assembly, heterotrimer of UreA (gamma), UreB (beta) and UreC (alpha) subunits. Three heterotrimers associate to form the active enzyme.

The protein resides in the cytoplasm. The catalysed reaction is urea + 2 H2O + H(+) = hydrogencarbonate + 2 NH4(+). It participates in nitrogen metabolism; urea degradation; CO(2) and NH(3) from urea (urease route): step 1/1. This chain is Urease subunit beta, found in Acinetobacter baumannii (strain ACICU).